A 431-amino-acid chain; its full sequence is UDP-N-acetylmuramate--L-alanine ligase (431 aa).

Residue 108–114 (GAHGKST) participates in ATP binding.

It belongs to the MurCDEF family.

The protein localises to the cytoplasm. The enzyme catalyses UDP-N-acetyl-alpha-D-muramate + L-alanine + ATP = UDP-N-acetyl-alpha-D-muramoyl-L-alanine + ADP + phosphate + H(+). It functions in the pathway cell wall biogenesis; peptidoglycan biosynthesis. Cell wall formation. This chain is UDP-N-acetylmuramate--L-alanine ligase, found in Campylobacter jejuni (strain RM1221).